The following is a 658-amino-acid chain: UvrABC system protein B (658 aa).

The 388-residue stretch at 26-413 (EGINSGKKKQ…SPEVIEQIIR (388 aa)) folds into the Helicase ATP-binding domain. Residue 39–46 (GATGTGKT) participates in ATP binding. A Beta-hairpin motif is present at residues 92-115 (YYDYYQPEAYVPQTDTFIEKDAQI). The Helicase C-terminal domain occupies 430–596 (QIDDLLGEIQ…TIQKGVRDVI (167 aa)). Positions 622-657 (EKTIAKMEAEMKEAAKALDFERAAELRDLLLELKAE) constitute a UVR domain.

It belongs to the UvrB family. Forms a heterotetramer with UvrA during the search for lesions. Interacts with UvrC in an incision complex.

It localises to the cytoplasm. In terms of biological role, the UvrABC repair system catalyzes the recognition and processing of DNA lesions. A damage recognition complex composed of 2 UvrA and 2 UvrB subunits scans DNA for abnormalities. Upon binding of the UvrA(2)B(2) complex to a putative damaged site, the DNA wraps around one UvrB monomer. DNA wrap is dependent on ATP binding by UvrB and probably causes local melting of the DNA helix, facilitating insertion of UvrB beta-hairpin between the DNA strands. Then UvrB probes one DNA strand for the presence of a lesion. If a lesion is found the UvrA subunits dissociate and the UvrB-DNA preincision complex is formed. This complex is subsequently bound by UvrC and the second UvrB is released. If no lesion is found, the DNA wraps around the other UvrB subunit that will check the other stand for damage. The sequence is that of UvrABC system protein B from Bacillus anthracis.